A 251-amino-acid chain; its full sequence is uncharacterized protein (251 aa).

12–21 (TGASSQGDIG) is an NADP(+) binding site. Substrate is bound at residue S148. Y161 functions as the Proton acceptor in the catalytic mechanism.

Belongs to the short-chain dehydrogenases/reductases (SDR) family.

This is an uncharacterized protein from Bacillus subtilis (strain 168).